The sequence spans 384 residues: 8-amino-7-oxononanoate synthase (384 aa).

Residue R21 coordinates substrate. Residue 108-109 (GF) participates in pyridoxal 5'-phosphate binding. Position 133 (H133) interacts with substrate. S179, H207, and T233 together coordinate pyridoxal 5'-phosphate. K236 is modified (N6-(pyridoxal phosphate)lysine). T352 lines the substrate pocket.

The protein belongs to the class-II pyridoxal-phosphate-dependent aminotransferase family. BioF subfamily. In terms of assembly, homodimer. Pyridoxal 5'-phosphate is required as a cofactor.

The enzyme catalyses 6-carboxyhexanoyl-[ACP] + L-alanine + H(+) = (8S)-8-amino-7-oxononanoate + holo-[ACP] + CO2. It functions in the pathway cofactor biosynthesis; biotin biosynthesis. In terms of biological role, catalyzes the decarboxylative condensation of pimeloyl-[acyl-carrier protein] and L-alanine to produce 8-amino-7-oxononanoate (AON), [acyl-carrier protein], and carbon dioxide. This is 8-amino-7-oxononanoate synthase from Escherichia coli (strain SE11).